A 176-amino-acid polypeptide reads, in one-letter code: Ribosome maturation factor RimM (176 aa).

In terms of domain architecture, PRC barrel spans lysine 93 to isoleucine 172.

It belongs to the RimM family. As to quaternary structure, binds ribosomal protein uS19.

The protein resides in the cytoplasm. Functionally, an accessory protein needed during the final step in the assembly of 30S ribosomal subunit, possibly for assembly of the head region. Essential for efficient processing of 16S rRNA. May be needed both before and after RbfA during the maturation of 16S rRNA. It has affinity for free ribosomal 30S subunits but not for 70S ribosomes. This chain is Ribosome maturation factor RimM, found in Campylobacter concisus (strain 13826).